Here is a 464-residue protein sequence, read N- to C-terminus: MTALQGFLTPTEIVAELDKYIIGQHDAKRNVAIALRNRWRRMHADADMRKEIMPNNILLIGPTGVGKTEIARRLAKLADAPFTKVEASKFTEVGYVGRDVESMVRDLVEQAVNMVKTQKKEEVKIKVSQVVEDILLDLLIPPVKSTGMGFKTASTQSIDTNEIPDNDQELNERTRELFREKIRSGELDERKVEINVQQQGPGVGVVGGAMDEASMMNIQEMIGNMMPKKTKKRKLSIAEARKILLEEESAKLIDMDDVKDEAIRKTENMGIIFIDEIDKVASSKKGNGPDVSREGVQRDLLPIVEGSAVNTKYGTVHTDHILFIAAGAFHVSKPSDLIPELQGRFPIRVELNSLTEADFYHILKEPKNALTRQYQALLSSENVNIEFHDDALKAISEIAFELNVEVENIGARRLHTVMSHLLNELLFDVPDKIETHSTVVITKELVDQKLKGLVKNRDLSQFIL.

Residues Ile22, 64–69 (GVGKTE), Asp275, Glu340, and Arg412 each bind ATP.

It belongs to the ClpX chaperone family. HslU subfamily. As to quaternary structure, a double ring-shaped homohexamer of HslV is capped on each side by a ring-shaped HslU homohexamer. The assembly of the HslU/HslV complex is dependent on binding of ATP.

Its subcellular location is the cytoplasm. Functionally, ATPase subunit of a proteasome-like degradation complex; this subunit has chaperone activity. The binding of ATP and its subsequent hydrolysis by HslU are essential for unfolding of protein substrates subsequently hydrolyzed by HslV. HslU recognizes the N-terminal part of its protein substrates and unfolds these before they are guided to HslV for hydrolysis. The chain is ATP-dependent protease ATPase subunit HslU from Cytophaga hutchinsonii (strain ATCC 33406 / DSM 1761 / CIP 103989 / NBRC 15051 / NCIMB 9469 / D465).